The primary structure comprises 335 residues: 1D-myo-inositol 2-acetamido-2-deoxy-alpha-D-glucopyranoside deacetylase (335 aa).

Zn(2+) contacts are provided by histidine 19, aspartate 22, and histidine 158.

The protein belongs to the MshB deacetylase family. Requires Zn(2+) as cofactor.

It catalyses the reaction 1D-myo-inositol 2-acetamido-2-deoxy-alpha-D-glucopyranoside + H2O = 1D-myo-inositol 2-amino-2-deoxy-alpha-D-glucopyranoside + acetate. Its function is as follows. Catalyzes the deacetylation of 1D-myo-inositol 2-acetamido-2-deoxy-alpha-D-glucopyranoside (GlcNAc-Ins) in the mycothiol biosynthesis pathway. The chain is 1D-myo-inositol 2-acetamido-2-deoxy-alpha-D-glucopyranoside deacetylase from Corynebacterium urealyticum (strain ATCC 43042 / DSM 7109).